A 117-amino-acid chain; its full sequence is MHVKYLAGIVGAALLMAGCSSSNELSAAGQSVRIVDEQPGAECQLIGTATGKQSNWLSGQHGEEGGSMRGAANDLRNQAAAMGGNVIYGISSPSQGMLSSFVPTDSQIIGQVYKCPN.

The first 22 residues, 1–22 (MHVKYLAGIVGAALLMAGCSSS), serve as a signal peptide directing secretion.

This is an uncharacterized protein from Escherichia coli O6:H1 (strain CFT073 / ATCC 700928 / UPEC).